The following is a 903-amino-acid chain: Translation initiation factor IF-2 (903 aa).

The disordered stretch occupies residues 49–314 (LNREHGSGPD…GSSLQQGFNK (266 aa)). The segment covering 68-82 (STLNIQGTGGKSKSV) has biased composition (polar residues). 2 stretches are compositionally biased toward basic and acidic residues: residues 93–163 (VKRD…EAAE) and 174–225 (EVSK…ENAT). The segment covering 265–279 (GRARPAKVARQKKSN) has biased composition (basic residues). Over residues 280-293 (KHSESKADREEARA) the composition is skewed to basic and acidic residues. One can recognise a tr-type G domain in the interval 402–571 (PRAPVVTIMG…LLQSEVLELK (170 aa)). The G1 stretch occupies residues 411 to 418 (GHVDHGKT). A GTP-binding site is contributed by 411-418 (GHVDHGKT). The segment at 436–440 (GITQH) is G2. The G3 stretch occupies residues 457 to 460 (DTPG). GTP contacts are provided by residues 457–461 (DTPGH) and 511–514 (NKID). The interval 511-514 (NKID) is G4. The G5 stretch occupies residues 547–549 (SAK).

This sequence belongs to the TRAFAC class translation factor GTPase superfamily. Classic translation factor GTPase family. IF-2 subfamily.

The protein resides in the cytoplasm. One of the essential components for the initiation of protein synthesis. Protects formylmethionyl-tRNA from spontaneous hydrolysis and promotes its binding to the 30S ribosomal subunits. Also involved in the hydrolysis of GTP during the formation of the 70S ribosomal complex. The sequence is that of Translation initiation factor IF-2 from Cronobacter sakazakii (strain ATCC BAA-894) (Enterobacter sakazakii).